Here is a 195-residue protein sequence, read N- to C-terminus: Molybdopterin synthase catalytic subunit (195 aa).

The disordered stretch occupies residues 1–37 (MSARPEPQPGSERNATEPLPSHLDPTTYPRTLTTTHG). Residues 25–37 (PTTYPRTLTTTHG) are compositionally biased toward low complexity. Substrate is bound by residues 141–142 (HR), Lys-157, and 164–166 (KRE).

This sequence belongs to the MoaE family. MOCS2B subfamily. In terms of assembly, heterotetramer; composed of 2 small (MOCS2A) and 2 large (MOCS2B) subunits.

The protein resides in the cytoplasm. The catalysed reaction is 2 [molybdopterin-synthase sulfur-carrier protein]-C-terminal-Gly-aminoethanethioate + cyclic pyranopterin phosphate + H2O = molybdopterin + 2 [molybdopterin-synthase sulfur-carrier protein]-C-terminal Gly-Gly + 2 H(+). The protein operates within cofactor biosynthesis; molybdopterin biosynthesis. Functionally, catalytic subunit of the molybdopterin synthase complex, a complex that catalyzes the conversion of precursor Z into molybdopterin. Acts by mediating the incorporation of 2 sulfur atoms from thiocarboxylated MOCS2A into precursor Z to generate a dithiolene group. This is Molybdopterin synthase catalytic subunit from Emericella nidulans (strain FGSC A4 / ATCC 38163 / CBS 112.46 / NRRL 194 / M139) (Aspergillus nidulans).